The sequence spans 128 residues: MVLPASMRLRGSRCFEHLQKWGYRFYGTSMVLRVIEANPQLLKAPHRHHNSTACRCAVVISSKVSKRAVIRNRLRRLLHDHLRSRLEVAPEHCNHWVLISLKPVASAIEASPLLEECDRLLNQAGLLS.

It belongs to the RnpA family. As to quaternary structure, consists of a catalytic RNA component (M1 or rnpB) and a protein subunit.

It catalyses the reaction Endonucleolytic cleavage of RNA, removing 5'-extranucleotides from tRNA precursor.. In terms of biological role, RNaseP catalyzes the removal of the 5'-leader sequence from pre-tRNA to produce the mature 5'-terminus. It can also cleave other RNA substrates such as 4.5S RNA. The protein component plays an auxiliary but essential role in vivo by binding to the 5'-leader sequence and broadening the substrate specificity of the ribozyme. The sequence is that of Ribonuclease P protein component from Prochlorococcus marinus (strain MIT 9313).